A 200-amino-acid chain; its full sequence is Proteasome subunit beta 2 (200 aa).

Position 1 (M1) is a propeptide, removed in mature form; by autocatalysis. Catalysis depends on T2, which acts as the Nucleophile.

This sequence belongs to the peptidase T1B family. The 20S proteasome core is composed of 14 alpha and 14 beta subunits that assemble into four stacked heptameric rings, resulting in a barrel-shaped structure. The two inner rings, each composed of seven catalytic beta subunits, are sandwiched by two outer rings, each composed of seven alpha subunits. The catalytic chamber with the active sites is on the inside of the barrel. Has a gated structure, the ends of the cylinder being occluded by the N-termini of the alpha-subunits. Is capped at one or both ends by the proteasome regulatory ATPase, PAN.

Its subcellular location is the cytoplasm. It catalyses the reaction Cleavage of peptide bonds with very broad specificity.. The formation of the proteasomal ATPase PAN-20S proteasome complex, via the docking of the C-termini of PAN into the intersubunit pockets in the alpha-rings, triggers opening of the gate for substrate entry. Interconversion between the open-gate and close-gate conformations leads to a dynamic regulation of the 20S proteasome proteolysis activity. Component of the proteasome core, a large protease complex with broad specificity involved in protein degradation. This chain is Proteasome subunit beta 2, found in Pyrobaculum islandicum (strain DSM 4184 / JCM 9189 / GEO3).